The following is a 239-amino-acid chain: Probable transcriptional regulatory protein BCAH187_A0615 (239 aa).

The protein belongs to the TACO1 family. YeeN subfamily.

The protein localises to the cytoplasm. The protein is Probable transcriptional regulatory protein BCAH187_A0615 of Bacillus cereus (strain AH187).